Consider the following 239-residue polypeptide: Ribonuclease 3 (239 aa).

Residues 18-141 form the RNase III domain; sequence YTTLEKALGY…LMAGVYLEAG (124 aa). Mg(2+) is bound at residue Glu-54. The active site involves Asp-58. Mg(2+) contacts are provided by Ser-127 and Glu-130. Glu-130 is an active-site residue. The DRBM domain maps to 168–237; that stretch reads DYKTALQELT…AYQALQKLKE (70 aa).

Belongs to the ribonuclease III family. As to quaternary structure, homodimer. Mg(2+) is required as a cofactor.

The protein resides in the cytoplasm. The enzyme catalyses Endonucleolytic cleavage to 5'-phosphomonoester.. Functionally, digests double-stranded RNA. Involved in the processing of primary rRNA transcript to yield the immediate precursors to the large and small rRNAs (23S and 16S). Processes some mRNAs, and tRNAs when they are encoded in the rRNA operon. Processes pre-crRNA and tracrRNA of type II CRISPR loci if present in the organism. The protein is Ribonuclease 3 of Helicobacter pylori (strain ATCC 700392 / 26695) (Campylobacter pylori).